A 101-amino-acid chain; its full sequence is MAITEEQVKHVAKLSKLSFSEEELADFTNQLDKIIDMVELLEEVDTTGVPFTSNVNESINVMREDVATPGMDRKELMRNVPESENGYIKVPAIMDNGEAGA.

Belongs to the GatC family. Heterotrimer of A, B and C subunits.

The catalysed reaction is L-glutamyl-tRNA(Gln) + L-glutamine + ATP + H2O = L-glutaminyl-tRNA(Gln) + L-glutamate + ADP + phosphate + H(+). It carries out the reaction L-aspartyl-tRNA(Asn) + L-glutamine + ATP + H2O = L-asparaginyl-tRNA(Asn) + L-glutamate + ADP + phosphate + 2 H(+). Functionally, allows the formation of correctly charged Asn-tRNA(Asn) or Gln-tRNA(Gln) through the transamidation of misacylated Asp-tRNA(Asn) or Glu-tRNA(Gln) in organisms which lack either or both of asparaginyl-tRNA or glutaminyl-tRNA synthetases. The reaction takes place in the presence of glutamine and ATP through an activated phospho-Asp-tRNA(Asn) or phospho-Glu-tRNA(Gln). The sequence is that of Aspartyl/glutamyl-tRNA(Asn/Gln) amidotransferase subunit C from Enterococcus faecalis (strain ATCC 700802 / V583).